The sequence spans 310 residues: Dermonecrotic toxin LiSicTox-alphaII2 (310 aa).

An N-terminal signal peptide occupies residues 1 to 18 (MLLRIALILGCWSILSEG). The propeptide occupies 19 to 26 (AENDIAER). The active site involves histidine 38. Mg(2+) contacts are provided by glutamate 58 and aspartate 60. The Nucleophile role is filled by histidine 74. 2 disulfides stabilise this stretch: cysteine 78–cysteine 84 and cysteine 80–cysteine 224. A glycan (N-linked (GlcNAc...) asparagine) is linked at asparagine 99. A Mg(2+)-binding site is contributed by aspartate 118.

Belongs to the arthropod phospholipase D family. Class II subfamily. Requires Mg(2+) as cofactor. As to expression, expressed by the venom gland.

The protein localises to the secreted. The enzyme catalyses an N-(acyl)-sphingosylphosphocholine = an N-(acyl)-sphingosyl-1,3-cyclic phosphate + choline. It catalyses the reaction an N-(acyl)-sphingosylphosphoethanolamine = an N-(acyl)-sphingosyl-1,3-cyclic phosphate + ethanolamine. The catalysed reaction is a 1-acyl-sn-glycero-3-phosphocholine = a 1-acyl-sn-glycero-2,3-cyclic phosphate + choline. It carries out the reaction a 1-acyl-sn-glycero-3-phosphoethanolamine = a 1-acyl-sn-glycero-2,3-cyclic phosphate + ethanolamine. Its function is as follows. Dermonecrotic toxins cleave the phosphodiester linkage between the phosphate and headgroup of certain phospholipids (sphingolipid and lysolipid substrates), forming an alcohol (often choline) and a cyclic phosphate. This toxin acts on sphingomyelin (SM). It may also act on ceramide phosphoethanolamine (CPE), lysophosphatidylcholine (LPC) and lysophosphatidylethanolamine (LPE), but not on lysophosphatidylserine (LPS), and lysophosphatidylglycerol (LPG). It acts by transphosphatidylation, releasing exclusively cyclic phosphate products as second products. Induces dermonecrosis, hemolysis, increased vascular permeability, edema, inflammatory response, and platelet aggregation. The chain is Dermonecrotic toxin LiSicTox-alphaII2 from Loxosceles intermedia (Brown spider).